Reading from the N-terminus, the 365-residue chain is UDP-N-acetylglucosamine--N-acetylmuramyl-(pentapeptide) pyrophosphoryl-undecaprenol N-acetylglucosamine transferase (365 aa).

UDP-N-acetyl-alpha-D-glucosamine contacts are provided by residues 17 to 19 (TGG), Asn129, Arg167, Ser194, Ile250, 269 to 274 (ALTVSE), and Gln295.

This sequence belongs to the glycosyltransferase 28 family. MurG subfamily.

The protein localises to the cell inner membrane. The catalysed reaction is di-trans,octa-cis-undecaprenyl diphospho-N-acetyl-alpha-D-muramoyl-L-alanyl-D-glutamyl-meso-2,6-diaminopimeloyl-D-alanyl-D-alanine + UDP-N-acetyl-alpha-D-glucosamine = di-trans,octa-cis-undecaprenyl diphospho-[N-acetyl-alpha-D-glucosaminyl-(1-&gt;4)]-N-acetyl-alpha-D-muramoyl-L-alanyl-D-glutamyl-meso-2,6-diaminopimeloyl-D-alanyl-D-alanine + UDP + H(+). It functions in the pathway cell wall biogenesis; peptidoglycan biosynthesis. Its function is as follows. Cell wall formation. Catalyzes the transfer of a GlcNAc subunit on undecaprenyl-pyrophosphoryl-MurNAc-pentapeptide (lipid intermediate I) to form undecaprenyl-pyrophosphoryl-MurNAc-(pentapeptide)GlcNAc (lipid intermediate II). This Shewanella sediminis (strain HAW-EB3) protein is UDP-N-acetylglucosamine--N-acetylmuramyl-(pentapeptide) pyrophosphoryl-undecaprenol N-acetylglucosamine transferase.